Consider the following 347-residue polypeptide: Histone deacetylase 11 (347 aa).

Positions 14–318 (KRWPIVYSPR…ARIIADSILN (305 aa)) are histone deacetylase. Histidine 143 is a catalytic residue.

Belongs to the histone deacetylase family. Interacts with HDAC6.

The protein resides in the nucleus. It catalyses the reaction N(6)-acetyl-L-lysyl-[histone] + H2O = L-lysyl-[histone] + acetate. Its function is as follows. Responsible for the deacetylation of lysine residues on the N-terminal part of the core histones (H2A, H2B, H3 and H4). Histone deacetylation gives a tag for epigenetic repression and plays an important role in transcriptional regulation, cell cycle progression and developmental events. Histone deacetylases act via the formation of large multiprotein complexes. In Mus musculus (Mouse), this protein is Histone deacetylase 11 (Hdac11).